We begin with the raw amino-acid sequence, 149 residues long: Ribonuclease H (149 aa).

Residues 1–142 (MSTITIHTDG…ADELAREGLA (142 aa)) enclose the RNase H type-1 domain. Asp9, Glu47, Asp70, and Asp134 together coordinate Mg(2+). The disordered stretch occupies residues 124–149 (HAGDPGNERADELAREGLAEARGRQP). The segment covering 129–149 (GNERADELAREGLAEARGRQP) has biased composition (basic and acidic residues).

Belongs to the RNase H family. In terms of assembly, monomer. Mg(2+) is required as a cofactor.

The protein localises to the cytoplasm. It carries out the reaction Endonucleolytic cleavage to 5'-phosphomonoester.. Its function is as follows. Endonuclease that specifically degrades the RNA of RNA-DNA hybrids. This chain is Ribonuclease H, found in Maricaulis maris (strain MCS10) (Caulobacter maris).